A 399-amino-acid polypeptide reads, in one-letter code: Flavohemoprotein (399 aa).

Residues 1–138 (MLAEKTRSII…IADIFITVEK (138 aa)) form the Globin domain. Position 22 is a phosphothreonine (threonine 22). Histidine 85 is a heme b binding site. Residues tyrosine 95 and glutamate 137 each act as charge relay system in the active site. The tract at residues 146-399 (WPGWKPFDIT…FGPKMSTVQV (254 aa)) is reductase. An FAD-binding FR-type domain is found at 147 to 264 (PGWKPFDITA…SAPAGDFAIN (118 aa)). FAD-binding positions include tyrosine 189 and 207–210 (RHYS). 281-286 (GVGVTP) is an NADP(+) binding site. 389–392 (PFGP) is an FAD binding site.

This sequence belongs to the globin family. Two-domain flavohemoproteins subfamily. The protein in the C-terminal section; belongs to the flavoprotein pyridine nucleotide cytochrome reductase family. The cofactor is FAD. Heme b serves as cofactor.

Its subcellular location is the cytoplasm. The catalysed reaction is 2 nitric oxide + NADPH + 2 O2 = 2 nitrate + NADP(+) + H(+). The enzyme catalyses 2 nitric oxide + NADH + 2 O2 = 2 nitrate + NAD(+) + H(+). Its function is as follows. Is involved in NO detoxification in an aerobic process, termed nitric oxide dioxygenase (NOD) reaction that utilizes O(2) and NAD(P)H to convert NO to nitrate, which protects the fungus from various noxious nitrogen compounds. Therefore, plays a central role in the inducible response to nitrosative stress. Functionally, in the presence of oxygen and NADH, it has NADH oxidase activity, which leads to the generation of superoxide and H(2)O(2). Under anaerobic conditions, it also exhibits nitric oxide reductase and FAD reductase activities. However, all these reactions are much lower than NOD activity. In Saccharomyces cerevisiae (strain ATCC 204508 / S288c) (Baker's yeast), this protein is Flavohemoprotein (YHB1).